Reading from the N-terminus, the 321-residue chain is Ribonuclease Z (321 aa).

Residues His-62, His-64, Asp-66, His-67, His-139, Asp-210, and His-268 each coordinate Zn(2+). Asp-66 functions as the Proton acceptor in the catalytic mechanism.

This sequence belongs to the RNase Z family. Homodimer. Zn(2+) is required as a cofactor.

The catalysed reaction is Endonucleolytic cleavage of RNA, removing extra 3' nucleotides from tRNA precursor, generating 3' termini of tRNAs. A 3'-hydroxy group is left at the tRNA terminus and a 5'-phosphoryl group is left at the trailer molecule.. Its function is as follows. Zinc phosphodiesterase, which displays some tRNA 3'-processing endonuclease activity. Probably involved in tRNA maturation, by removing a 3'-trailer from precursor tRNA. The protein is Ribonuclease Z of Trichodesmium erythraeum (strain IMS101).